Consider the following 214-residue polypeptide: MATGFCSSFGLLVVLLLKNVADVGAFPSVPLFSLFTNAVSRAQYIHMLAADTYRDYERTYITDEQRHSNKNSHVVSCYSETIPYPTDKDNTHQKSDLELLRFSLNLIQSWLNPVQALNKVFSNNLVFGSSDVYERLKYLEEGIQALMQELEDGSFRSFPFLRPPYERFDINLRSDDALVKVYGLLSCFKKDMHKVETYLKVMKCRRFVESNCTI.

Residues Met1 to Ala25 form the signal peptide. Disulfide bonds link Cys77-Cys187 and Cys204-Cys212.

This sequence belongs to the somatotropin/prolactin family.

The protein localises to the secreted. Functionally, growth hormone plays an important role in growth control. In Xenopus laevis (African clawed frog), this protein is Somatotropin-A (gh-a).